The primary structure comprises 459 residues: Cytosolic carboxypeptidase 6 (459 aa).

Residues 142–418 form the Peptidase M14 domain; the sequence is IPYTYGQMQI…AFCRALLNFY (277 aa). The Zn(2+) site is built by histidine 204, glutamate 207, and histidine 302. The active-site Proton donor/acceptor is the glutamate 376.

This sequence belongs to the peptidase M14 family. The cofactor is Zn(2+). As to expression, expressed in labial and amphid neurons.

The protein resides in the cytoplasm. The enzyme catalyses (L-glutamyl)(n+1)-gamma-L-glutamyl-L-glutamyl-[protein] + H2O = (L-glutamyl)(n)-gamma-L-glutamyl-L-glutamyl-[protein] + L-glutamate. In terms of biological role, metallocarboxypeptidase that catalyzes the removing of polyglutamate side chains that are present on the gamma-carboxyl group of glutamate residues of tubulin in sensory cilia. Probably via the deglutamylation of tubulin, promotes microtubule stability required for axon regrowth after injury. Also regulates microtubule dynamics in uterine muscle cells. In Caenorhabditis elegans, this protein is Cytosolic carboxypeptidase 6.